The chain runs to 707 residues: Signal transducer and activator of transcription A (707 aa).

Polar residues predominate over residues 70–89 (LNQSDQFNLGRSNNLTPRTN). Residues 70–246 (LNQSDQFNLG…GNPNLSSPQP (177 aa)) are disordered. Residues 90–111 (QLQQLQQQQQQQQQPQQQQQQQ) show a composition bias toward low complexity. Residues 112–121 (TYGTQSPIHM) show a composition bias toward polar residues. The segment covering 142-238 (QQSYNNNNSN…QQQQQQQQGN (97 aa)) has biased composition (low complexity). Residues 242-356 (SSPQPILDTI…IQSILNPQHS (115 aa)) adopt a coiled-coil conformation. Residues 443–487 (KFLAGTRKCSVNLKFGVNIRDLDNVTTTVESDASNPFVVITNECQ) mediate DNA binding. An SH2 domain is found at 583–686 (WQEGIIYGYM…FLKLHKDTAL (104 aa)). Tyr-702 is subject to Phosphotyrosine.

Belongs to the transcription factor STAT family. As to quaternary structure, monomer, in the absence of tyrosine phosphorylation. Homodimer, or heterodimer with another family member, when tyrosine phosphorylated. Tyrosine phosphorylated in response to cAMP. Not tyrosine phosphorylated in growing cells. Tyrosine phosphorylation is first detected at the tight mound stage, continues throughout the slug stage and early culmination, and starts to decrease at mid-culmination. Barely detectable in fruiting bodies.

It localises to the cytoplasm. The protein localises to the nucleus. Functionally, transcription factor that binds to 5'-TTGAATTGA-3' elements in the promoter region of target genes. Functions as a repressor of the ecmB gene. Regulates the differentiation of prestalk cells during development. The polypeptide is Signal transducer and activator of transcription A (dstA) (Dictyostelium discoideum (Social amoeba)).